The chain runs to 295 residues: Iron-sulfur cluster carrier protein (295 aa).

Position 38-45 (38-45 (GKGGVGKS)) interacts with ATP.

The protein belongs to the Mrp/NBP35 ATP-binding proteins family. In terms of assembly, homodimer.

Functionally, binds and transfers iron-sulfur (Fe-S) clusters to target apoproteins. Can hydrolyze ATP. In Pyrococcus furiosus (strain ATCC 43587 / DSM 3638 / JCM 8422 / Vc1), this protein is Iron-sulfur cluster carrier protein.